The chain runs to 95 residues: Large ribosomal subunit protein uL23 (95 aa).

This sequence belongs to the universal ribosomal protein uL23 family. In terms of assembly, part of the 50S ribosomal subunit. Contacts protein L29, and trigger factor when it is bound to the ribosome.

One of the early assembly proteins it binds 23S rRNA. One of the proteins that surrounds the polypeptide exit tunnel on the outside of the ribosome. Forms the main docking site for trigger factor binding to the ribosome. The polypeptide is Large ribosomal subunit protein uL23 (Pelotomaculum thermopropionicum (strain DSM 13744 / JCM 10971 / SI)).